A 700-amino-acid chain; its full sequence is MAVTGVSSAFGRLFKQDKTHKRVIGTGTKLTVTRQILEHLEGGNVSKAVSVLFASPEPVSYWLYERLFRSCSSKALVVQARKVQSHLVTFSPLPPIFLLNRAIEAYGKCGCVDDARELFEEMPERDGGSWNAVITACAQNGVSDEVFRMFRRMNRDGVRATETSFAGVLKSCGLILDLRLLRQLHCAVVKYGYSGNVDLETSIVDVYGKCRVMSDARRVFDEIVNPSDVSWNVIVRRYLEMGFNDEAVVMFFKMLELNVRPLNHTVSSVMLACSRSLALEVGKVIHAIAVKLSVVADTVVSTSVFDMYVKCDRLESARRVFDQTRSKDLKSWTSAMSGYAMSGLTREARELFDLMPERNIVSWNAMLGGYVHAHEWDEALDFLTLMRQEIENIDNVTLVWILNVCSGISDVQMGKQAHGFIYRHGYDTNVIVANALLDMYGKCGTLQSANIWFRQMSELRDEVSWNALLTGVARVGRSEQALSFFEGMQVEAKPSKYTLATLLAGCANIPALNLGKAIHGFLIRDGYKIDVVIRGAMVDMYSKCRCFDYAIEVFKEAATRDLILWNSIIRGCCRNGRSKEVFELFMLLENEGVKPDHVTFLGILQACIREGHVELGFQYFSSMSTKYHISPQVEHYDCMIELYCKYGCLHQLEEFLLLMPFDPPMQMLTRINDACQRYRWSKLGAWAAKRLMNDHYLQPP.

PPR repeat units follow at residues 95–125, 126–160, 161–195, 196–226, 227–261, 262–296, 297–327, 328–362, 363–389, 394–428, 429–459, 461–495, 497–529, 530–560, 561–595, 596–626, and 632–662; these read PIFLLNRAIEAYGKCGCVDDARELFEEMPER, DGGSWNAVITACAQNGVSDEVFRMFRRMNRDGVRA, TETSFAGVLKSCGLILDLRLLRQLHCAVVKYGYSG, NVDLETSIVDVYGKCRVMSDARRVFDEIVNP, SDVSWNVIVRRYLEMGFNDEAVVMFFKMLELNVRP, LNHTVSSVMLACSRSLALEVGKVIHAIAVKLSVVA, DTVVSTSVFDMYVKCDRLESARRVFDQTRSK, DLKSWTSAMSGYAMSGLTREARELFDLMPERNIVS, WNAMLGGYVHAHEWDEALDFLTLMRQE, DNVTLVWILNVCSGISDVQMGKQAHGFIYRHGYDT, NVIVANALLDMYGKCGTLQSANIWFRQMSEL, DEVSWNALLTGVARVGRSEQALSFFEGMQVEAKPS, YTLATLLAGCANIPALNLGKAIHGFLIRDGYKI, DVVIRGAMVDMYSKCRCFDYAIEVFKEAATR, DLILWNSIIRGCCRNGRSKEVFELFMLLENEGVKP, DHVTFLGILQACIREGHVELGFQYFSSMSTK, and QVEHYDCMIELYCKYGCLHQLEEFLLLMPFD.

It belongs to the PPR family. PCMP-A subfamily.

The polypeptide is Pentatricopeptide repeat-containing protein At3g26540 (PCMP-A5) (Arabidopsis thaliana (Mouse-ear cress)).